Here is a 509-residue protein sequence, read N- to C-terminus: Transcription factor SOX-9 (509 aa).

Disordered stretches follow at residues 1-67 (MNLL…SEED) and 160-273 (RLRV…FRDV). Positions 30–41 (SAGSPCPSGSGS) are enriched in low complexity. The segment covering 42 to 52 (DTENTRPQENT) has biased composition (polar residues). 2 stretches are compositionally biased toward basic and acidic residues: residues 56–67 (GEPDLKKESEED) and 160–174 (RLRV…DYKY). The dimerization (DIM) stretch occupies residues 63 to 103 (ESEEDKFPVCIREAVSQVLKGYDWTLVPMPVRVNGSSKNKP). The PQA stretch occupies residues 63–103 (ESEEDKFPVCIREAVSQVLKGYDWTLVPMPVRVNGSSKNKP). The residue at position 64 (Ser64) is a Phosphoserine. Positions 105-173 (VKRPMNAFMV…QHKKDHPDYK (69 aa)) form a DNA-binding region, HMG box. A Phosphoserine modification is found at Ser211. The tract at residues 224 to 307 (PGEHSGQSQG…LPPNGHPGVP (84 aa)) is transactivation domain (TAM). 2 short sequence motifs (9aaTAD) span residues 275–284 (IGELSSDVIS) and 290–298 (DVNEFDQYL). Residues 330–415 (SAGHVWMSKQ…HYSEQQQHSP (86 aa)) are disordered. Positions 341-376 (APPPPPQQPPQAPPAPQAPPQPQAAPPQQPAAPPQQ) are enriched in pro residues. Polar residues predominate over residues 380–415 (HTLTTLSSEPGQSQRTHIKTEQLSPSHYSEQQQHSP). The segment at 394-509 (RTHIKTEQLS…QPVYTQLTRP (116 aa)) is transactivation domain (TAC). Lys398 participates in a covalent cross-link: Glycyl lysine isopeptide (Lys-Gly) (interchain with G-Cter in ubiquitin). A 9aaTAD 3 motif is present at residues 460–468 (TGLYSTFTY). The segment at 479–509 (PIADTSGVPSIPQTHSPQHWEQPVYTQLTRP) is disordered. Residues 485 to 509 (GVPSIPQTHSPQHWEQPVYTQLTRP) show a composition bias toward polar residues.

In terms of assembly, homodimer; homodimerization is required for activity. Interacts (via C-terminus) with ZNF219; forming a complex that binds to the COL2A1 promoter and activates COL2A1 expression. Interacts with DDRGK1. Interacts with EP300/p300. Interacts with beta-catenin (CTNNB1); inhibiting CTNNB1 activity by competing with the binding sites of TCF/LEF within CTNNB1. In terms of processing, acetylated; acetylation impairs nuclear localization and ability to transactivate expression of target genes. Deacetylated by SIRT1. Post-translationally, phosphorylation at Ser-64 and Ser-211 by PKA increases transcriptional activity and may help delay chondrocyte maturation downstream of PTHLH/PTHrP signaling. Phosphorylation at either Ser-64 or Ser-211 is required for sumoylation, but phosphorylation is not dependent on sumoylation. Phosphorylated on tyrosine residues; tyrosine dephosphorylation by PTPN11/SHP2 blocks SOX9 phosphorylation by PKA and subsequent SUMOylation. Ubiquitinated; ubiquitination leads to proteasomal degradation and is negatively regulated by DDRGK1. In terms of processing, sumoylated; phosphorylation at either Ser-64 or Ser-211 is required for sumoylation. Sumoylation is induced by BMP signaling pathway.

The protein resides in the nucleus. Its function is as follows. Transcription factor that plays a key role in chondrocytes differentiation and skeletal development. Specifically binds the 5'-ACAAAG-3' DNA motif present in enhancers and super-enhancers and promotes expression of genes important for chondrogenesis, including cartilage matrix protein-coding genes COL2A1, COL4A2, COL9A1, COL11A2 and ACAN, SOX5 and SOX6. Also binds to some promoter regions. Plays a central role in successive steps of chondrocyte differentiation. Absolutely required for precartilaginous condensation, the first step in chondrogenesis during which skeletal progenitors differentiate into prechondrocytes. Together with SOX5 and SOX6, required for overt chondrogenesis when condensed prechondrocytes differentiate into early stage chondrocytes, the second step in chondrogenesis. Later, required to direct hypertrophic maturation and block osteoblast differentiation of growth plate chondrocytes: maintains chondrocyte columnar proliferation, delays prehypertrophy and then prevents osteoblastic differentiation of chondrocytes by lowering beta-catenin (CTNNB1) signaling and RUNX2 expression. Also required for chondrocyte hypertrophy, both indirectly, by keeping the lineage fate of chondrocytes, and directly, by remaining present in upper hypertrophic cells and transactivating COL10A1 along with MEF2C. Low lipid levels are the main nutritional determinant for chondrogenic commitment of skeletal progenitor cells: when lipids levels are low, FOXO (FOXO1 and FOXO3) transcription factors promote expression of SOX9, which induces chondrogenic commitment and suppresses fatty acid oxidation. Mechanistically, helps, but is not required, to remove epigenetic signatures of transcriptional repression and deposit active promoter and enhancer marks at chondrocyte-specific genes. Acts in cooperation with the Hedgehog pathway-dependent GLI (GLI1 and GLI3) transcription factors. In addition to cartilage development, also acts as a regulator of proliferation and differentiation in epithelial stem/progenitor cells: involved in the lung epithelium during branching morphogenesis, by balancing proliferation and differentiation and regulating the extracellular matrix. Controls epithelial branching during kidney development. This chain is Transcription factor SOX-9, found in Homo sapiens (Human).